The chain runs to 1146 residues: DNA polymerase II large subunit (1146 aa).

The protein belongs to the archaeal DNA polymerase II family. As to quaternary structure, heterodimer of a large subunit and a small subunit.

It catalyses the reaction DNA(n) + a 2'-deoxyribonucleoside 5'-triphosphate = DNA(n+1) + diphosphate. The catalysed reaction is Exonucleolytic cleavage in the 3'- to 5'-direction to yield nucleoside 5'-phosphates.. In terms of biological role, possesses two activities: a DNA synthesis (polymerase) and an exonucleolytic activity that degrades single-stranded DNA in the 3'- to 5'-direction. Has a template-primer preference which is characteristic of a replicative DNA polymerase. This chain is DNA polymerase II large subunit, found in Methanosarcina barkeri (strain Fusaro / DSM 804).